Here is a 769-residue protein sequence, read N- to C-terminus: Metal transporter CNNM4 (769 aa).

At 1–175 (MAASAGCYYG…RLRVLEEEKP (175 aa)) the chain is on the extracellular side. N-linked (GlcNAc...) asparagine glycosylation is found at N99 and N115. In terms of domain architecture, CNNM transmembrane spans 175–355 (PLLPIWLQAC…EPYSGIVREE (181 aa)). The chain crosses the membrane as a helical span at residues 176–196 (LLPIWLQACIIAVLLTLSGIF). The Cytoplasmic portion of the chain corresponds to 197–237 (SGLNLGLMALDPMELRVVQRCGTEKEKRYASKIEPVRRKGN). An intramembrane region (helical) is located at residues 238 to 258 (YLLCSLLLGNVLVNTTLTALL). Residues 259 to 261 (DEL) are Cytoplasmic-facing. The chain crosses the membrane as a helical span at residues 262–282 (IGSGLAAVLASTTGIVVLGEI). Residues 283–292 (VPQALCSRHG) are Extracellular-facing. A helical transmembrane segment spans residues 293–313 (LAVGANTLWLTRIFMLLTFPV). The Cytoplasmic portion of the chain corresponds to 314–769 (AYPVSRLLDC…SQHSLQHNAV (456 aa)). 2 consecutive CBS domains span residues 374–435 (MTKV…CTPL) and 442–508 (YSHP…ILDE). A disordered region spans residues 717-769 (LMSSRLDSSPQSPEGGTRKPDSTLSERSEVLEDETTSLLNQRNSQHSLQHNAV). Polar residues predominate over residues 721 to 730 (RLDSSPQSPE). Residues 732-746 (GTRKPDSTLSERSEV) show a composition bias toward basic and acidic residues. Residues 752 to 769 (TSLLNQRNSQHSLQHNAV) show a composition bias toward polar residues.

Belongs to the ACDP family.

Its subcellular location is the cell membrane. Its function is as follows. Probable metal transporter. The protein is Metal transporter CNNM4 (cnnm4) of Xenopus tropicalis (Western clawed frog).